Reading from the N-terminus, the 598-residue chain is uncharacterized protein (598 aa).

The Mn(2+) site is built by aspartate 397, aspartate 408, glutamate 506, and glutamate 520.

The protein belongs to the peptidase M24B family. Mn(2+) is required as a cofactor.

This is an uncharacterized protein from Schizosaccharomyces pombe (strain 972 / ATCC 24843) (Fission yeast).